The sequence spans 178 residues: Large ribosomal subunit protein uL6 (178 aa).

Belongs to the universal ribosomal protein uL6 family. As to quaternary structure, part of the 50S ribosomal subunit.

Its function is as follows. This protein binds to the 23S rRNA, and is important in its secondary structure. It is located near the subunit interface in the base of the L7/L12 stalk, and near the tRNA binding site of the peptidyltransferase center. The sequence is that of Large ribosomal subunit protein uL6 from Streptococcus equi subsp. zooepidemicus (strain H70).